Here is a 593-residue protein sequence, read N- to C-terminus: Efflux pump FUBT (593 aa).

A disordered region spans residues 1 to 44 (MAIDPQPSSPSLSSETIANDTIGNDNNVNEPSVEPKTQENQHTV). A compositionally biased stretch (polar residues) spans 9-30 (SPSLSSETIANDTIGNDNNVNE). Residue Asn19 is glycosylated (N-linked (GlcNAc...) asparagine). 12 consecutive transmembrane segments (helical) span residues 98-118 (WAFV…SSAY), 135-155 (VATL…LIWA), 167-187 (FFFT…AGSI), 195-215 (FLTG…IADM), 227-247 (MFSG…GFLG), 254-274 (WLHG…TVFI), 337-357 (IYIS…PIVF), 367-387 (IGGL…ISFA), 410-430 (LPPA…FAWT), 438-458 (IVPI…FMAL), 468-488 (IFAA…GAAF), and 503-523 (WASS…FLFY). The disordered stretch occupies residues 570–593 (THNSHASAAHSHGHRRSLSYTRSV).

Belongs to the major facilitator superfamily. DHA1 family. Polyamines/proton antiporter (TC 2.A.1.2.16) subfamily.

The protein resides in the cell membrane. In terms of biological role, efflux pump involved in export of fusaric acid, a mycotoxin with low to moderate toxicity to animals and humans, but with high phytotoxic properties. Constitutes a self-protecting mechanism of the fungus against critical levels of FSA within the cell. In Fusarium oxysporum (Fusarium vascular wilt), this protein is Efflux pump FUBT.